We begin with the raw amino-acid sequence, 535 residues long: Beta-glucosidase 47 (535 aa).

The signal sequence occupies residues 1–38 (MKKSIVYEIMETKSSMYLSQFRLWLCFIITTLVSLSSS). A beta-D-glucoside is bound at residue Q73. N93 carries an N-linked (GlcNAc...) asparagine glycan. Residues H175 and 220 to 221 (NE) contribute to the a beta-D-glucoside site. E221 functions as the Proton donor in the catalytic mechanism. An intrachain disulfide couples C240 to C247. N-linked (GlcNAc...) asparagine glycosylation occurs at N246. A beta-D-glucoside is bound at residue Y363. A disulfide bridge links C371 with C376. N419 is a glycosylation site (N-linked (GlcNAc...) asparagine). E426 serves as a coordination point for a beta-D-glucoside. E426 serves as the catalytic Nucleophile. An N-linked (GlcNAc...) asparagine glycan is attached at N432. A beta-D-glucoside-binding positions include W470, 477–478 (EW), and F486.

The protein belongs to the glycosyl hydrolase 1 family.

The catalysed reaction is Hydrolysis of terminal, non-reducing beta-D-glucosyl residues with release of beta-D-glucose.. The polypeptide is Beta-glucosidase 47 (Arabidopsis thaliana (Mouse-ear cress)).